Here is a 697-residue protein sequence, read N- to C-terminus: Elongation factor G (697 aa).

The 276-residue stretch at 10–285 folds into the tr-type G domain; it reads ERTRNIGIMA…AVVDYLPSPL (276 aa). GTP is bound by residues 19 to 26, 83 to 87, and 137 to 140; these read AHIDAGKT, DTPGH, and NKMD.

The protein belongs to the TRAFAC class translation factor GTPase superfamily. Classic translation factor GTPase family. EF-G/EF-2 subfamily.

The protein localises to the cytoplasm. In terms of biological role, catalyzes the GTP-dependent ribosomal translocation step during translation elongation. During this step, the ribosome changes from the pre-translocational (PRE) to the post-translocational (POST) state as the newly formed A-site-bound peptidyl-tRNA and P-site-bound deacylated tRNA move to the P and E sites, respectively. Catalyzes the coordinated movement of the two tRNA molecules, the mRNA and conformational changes in the ribosome. In Pediococcus pentosaceus (strain ATCC 25745 / CCUG 21536 / LMG 10740 / 183-1w), this protein is Elongation factor G.